The following is a 258-amino-acid chain: Small ribosomal subunit protein uS3 (258 aa).

In terms of domain architecture, KH type-2 spans 16–85 (IDEYLEKELE…NPQVEVKEVD (70 aa)). Residues 198–258 (RVTETPAEEA…KDADGEESEK (61 aa)) are disordered. Acidic residues predominate over residues 203-245 (PAEEASEASEVVEDLEEVEDLEEIEDLEEVEDLEEVEDLEDTE).

It belongs to the universal ribosomal protein uS3 family. In terms of assembly, part of the 30S ribosomal subunit.

Functionally, binds the lower part of the 30S subunit head. In Methanothermobacter thermautotrophicus (strain ATCC 29096 / DSM 1053 / JCM 10044 / NBRC 100330 / Delta H) (Methanobacterium thermoautotrophicum), this protein is Small ribosomal subunit protein uS3.